Here is a 353-residue protein sequence, read N- to C-terminus: Casein kinase II subunit alpha (353 aa).

The Protein kinase domain occupies tyrosine 39 to phenylalanine 324. ATP-binding positions include leucine 45 to valine 53 and lysine 68. The active-site Proton acceptor is the aspartate 156. The segment at methionine 334–glutamate 353 is disordered.

This sequence belongs to the protein kinase superfamily. Ser/Thr protein kinase family. CK2 subfamily. As to quaternary structure, tetramer of two alpha and two beta chains.

The enzyme catalyses L-seryl-[protein] + ATP = O-phospho-L-seryl-[protein] + ADP + H(+). It carries out the reaction L-threonyl-[protein] + ATP = O-phospho-L-threonyl-[protein] + ADP + H(+). Functionally, casein kinases are operationally defined by their preferential utilization of acidic proteins such as caseins as substrates. The alpha chain contains the catalytic site. May participate in Wnt signaling. The sequence is that of Casein kinase II subunit alpha from Spodoptera frugiperda (Fall armyworm).